A 733-amino-acid polypeptide reads, in one-letter code: Catalase-peroxidase (733 aa).

A disordered region spans residues 1-25 (MNEERKCPITGATHKPSAEKGRSNH). The span at 16–25 (PSAEKGRSNH) shows a compositional bias: basic and acidic residues. The segment at residues 96-219 (WHSAGTYRTS…LAAVQMGLIY (124 aa)) is a cross-link (tryptophyl-tyrosyl-methioninium (Trp-Tyr) (with M-245)). The Proton acceptor role is filled by H97. A cross-link (tryptophyl-tyrosyl-methioninium (Tyr-Met) (with W-96)) is located at residues 219 to 245 (YVNPEGPNGKPDPLAAAKDIRETFARM). H260 contacts heme b.

It belongs to the peroxidase family. Peroxidase/catalase subfamily. Homodimer or homotetramer. Heme b is required as a cofactor. Post-translationally, formation of the three residue Trp-Tyr-Met cross-link is important for the catalase, but not the peroxidase activity of the enzyme.

It catalyses the reaction H2O2 + AH2 = A + 2 H2O. It carries out the reaction 2 H2O2 = O2 + 2 H2O. Bifunctional enzyme with both catalase and broad-spectrum peroxidase activity. The protein is Catalase-peroxidase of Chlorobium chlorochromatii (strain CaD3).